Consider the following 537-residue polypeptide: Phosphoenolpyruvate carboxykinase (ATP) (537 aa).

Substrate-binding residues include Arg-61, Tyr-195, and Lys-201. ATP contacts are provided by residues Lys-201, His-220, and 236–244; that span reads GLSGTGKTT. 2 residues coordinate Mn(2+): Lys-201 and His-220. Asp-257 is a Mn(2+) binding site. Positions 285, 323, and 448 each coordinate ATP. Arg-323 lines the substrate pocket.

The protein belongs to the phosphoenolpyruvate carboxykinase (ATP) family. Requires Mn(2+) as cofactor.

The protein resides in the cytoplasm. The catalysed reaction is oxaloacetate + ATP = phosphoenolpyruvate + ADP + CO2. Its pathway is carbohydrate biosynthesis; gluconeogenesis. In terms of biological role, involved in the gluconeogenesis. Catalyzes the conversion of oxaloacetate (OAA) to phosphoenolpyruvate (PEP) through direct phosphoryl transfer between the nucleoside triphosphate and OAA. The chain is Phosphoenolpyruvate carboxykinase (ATP) from Rhodopseudomonas palustris (strain ATCC BAA-98 / CGA009).